The chain runs to 281 residues: Diaminopimelate epimerase (281 aa).

2 residues coordinate substrate: Asn-11 and Asn-65. Cys-74 functions as the Proton donor in the catalytic mechanism. Substrate-binding positions include 75–76 (GN), Asn-164, Asn-197, and 215–216 (ER). Cys-224 functions as the Proton acceptor in the catalytic mechanism. 225–226 (GT) provides a ligand contact to substrate.

This sequence belongs to the diaminopimelate epimerase family. In terms of assembly, homodimer.

The protein resides in the cytoplasm. The enzyme catalyses (2S,6S)-2,6-diaminopimelate = meso-2,6-diaminopimelate. It functions in the pathway amino-acid biosynthesis; L-lysine biosynthesis via DAP pathway; DL-2,6-diaminopimelate from LL-2,6-diaminopimelate: step 1/1. In terms of biological role, catalyzes the stereoinversion of LL-2,6-diaminopimelate (L,L-DAP) to meso-diaminopimelate (meso-DAP), a precursor of L-lysine and an essential component of the bacterial peptidoglycan. This Heliobacterium modesticaldum (strain ATCC 51547 / Ice1) protein is Diaminopimelate epimerase.